Consider the following 1292-residue polypeptide: Sorbin and SH3 domain-containing protein 1 (1292 aa).

Disordered regions lie at residues 1 to 29, 73 to 158, 214 to 275, and 318 to 381; these read MSSE…ATAD, LRAS…AQPE, HLQR…SSPL, and REQQ…MDEV. The span at 74–89 shows a compositional bias: low complexity; that stretch reads RASSSYRETPSSSPAS. The residue at position 82 (Thr82) is a Phosphothreonine. Residues Ser86 and Ser89 each carry the phosphoserine modification. A compositionally biased stretch (basic and acidic residues) spans 93–102; sequence TRQHESKPGL. A phosphoserine mark is found at Glu105, Leu114, Val137, Ser146, Ser242, and Ser259. The span at 114 to 128 shows a compositional bias: polar residues; the sequence is LSSSADANGNAQPSS. Positions 240 to 252 are enriched in pro residues; sequence SFSPPPPLVPPAP. Over residues 266 to 275 the composition is skewed to polar residues; it reads AVSSTDSSPL. Position 341 is a phosphoserine (Ser341). A Phosphothreonine modification is found at Thr344. Phosphoserine occurs at positions 346 and 350. Residues 354–365 show a composition bias toward basic and acidic residues; that stretch reads AIEKRAKDDSRR. Residues 366–469 form the SoHo domain; it reads VVKSTQDLSD…YSPRYSFSED (104 aa). Phosphoserine is present on residues Ser369, Ser374, and Asn387. Residues 405–534 are disordered; it reads LNRDTPEENP…TRKYRAEPKS (130 aa). A compositionally biased stretch (polar residues) spans 437 to 450; it reads YTPTYQFPASTPSP. A phosphoserine mark is found at Ser452, Ser465, Asp469, Ser472, Arg478, and Ser481. Residues 510-534 show a composition bias toward basic and acidic residues; that stretch reads SSERNDWEPPDKKVDTRKYRAEPKS. The residue at position 536 (Tyr536) is a Phosphotyrosine; by ABL1. 4 positions are modified to phosphoserine: Ser556, Asn603, Ser609, and Ser640. The segment at 628–650 is disordered; that stretch reads APSANVPQSSAISPTPEISSETP. Residue Tyr654 is modified to Phosphotyrosine; by ABL1. Ser665 and Lys700 each carry phosphoserine. The segment at 692–716 is disordered; that stretch reads PLQGLSGLKRPSSSASTKDSESPRH. Thr708 is subject to Phosphothreonine. A phosphoserine mark is found at Ser713, Ile730, Asp735, and Ile765. One can recognise an SH3 1 domain in the interval 793–852; that stretch reads SEMRPARAKFDFKAQTLKELPLQKGDIVYIYKQIDQNWYEGEHHGRVGIFPRTYIELLPP. Phosphothreonine is present on Thr862. Residues 867 to 928 form the SH3 2 domain; that stretch reads LEYGEAIAKF…PITYVDVIKR (62 aa). Val923 is modified (phosphoserine). Tyr937 bears the Phosphotyrosine mark. Over residues 944–954 the composition is skewed to low complexity; the sequence is SSPSRSATASP. 4 disordered regions span residues 944–976, 1041–1064, 1106–1150, and 1162–1230; these read SSPS…SRRA, SDRP…TYSL, QLSD…KKSC, and TEQR…SQTS. Ser945 and Ser953 each carry phosphoserine. Residues 955-971 show a composition bias toward polar residues; it reads QFSSHSKLITPAPSSLP. Residues 1106–1117 show a composition bias toward polar residues; it reads QLSDAFSSQSKR. The segment covering 1119–1136 has biased composition (basic and acidic residues); that stretch reads PWREESGQYERKAERGAG. The segment covering 1162–1172 has biased composition (polar residues); sequence TEQRLSDLNTP. Over residues 1192–1203 the composition is skewed to basic and acidic residues; that stretch reads QTERHRGGEQAG. Residues 1211 to 1230 show a composition bias toward polar residues; sequence GSQQPQAQQRRVTPDRSQTS. Residue Gln1213 is modified to Phosphoserine. One can recognise an SH3 3 domain in the interval 1231 to 1292; sequence QDLFSYQALY…PGNYVKPLYL (62 aa). Tyr1240 is modified (phosphotyrosine; by ABL1).

As to quaternary structure, interacts (via third SH3 domain) with the Ten-1 ICD form of TENM1; the interaction induces the translocation of SORBS1 to the nucleus. Interacts with INSM1. Interacts with the long isoform of AFDN and with VCL. AFDN and VCL bind to SORBS1 in a competitive manner and do not form a ternary complex. Interacts with ABL1, CBL, CBLB and INPPL1/SHIP2 through the third SH3 domain. Interaction with ABL1 occurs only after insulin stimulation while this has no effect on the interaction with INPPL1. Interacts with the insulin receptor but dissociates from it following insulin stimulation. Also interacts with SCA7, PTK2/FAK1 and flotillin. Interacts (via SH3 domain 2) with PXN. O-glycosylated. Detected in skeletal muscle (at protein level). Widely expressed with highest levels in heart and skeletal muscle.

It localises to the cell junction. Its subcellular location is the adherens junction. It is found in the cell membrane. The protein resides in the cytoplasm. The protein localises to the cytoskeleton. It localises to the focal adhesion. Its subcellular location is the nucleus. It is found in the nucleus matrix. In terms of biological role, plays a role in tyrosine phosphorylation of CBL by linking CBL to the insulin receptor. Required for insulin-stimulated glucose transport. Involved in formation of actin stress fibers and focal adhesions. In Homo sapiens (Human), this protein is Sorbin and SH3 domain-containing protein 1.